The chain runs to 183 residues: Capsid protein (183 aa).

The segment at 136-183 is disordered; sequence NAPILSTLPETTVVRRRGRSPRRRTPSPRRRRSQSPRRRRSQSRESQC. Over residues 149 to 176 the composition is skewed to basic residues; it reads VRRRGRSPRRRTPSPRRRRSQSPRRRRS. Serine 155, serine 162, and serine 170 each carry phosphoserine; by host. The 1; half-length repeat unit spans residues 155-161; the sequence is SPRRRTP. Residues 155-177 form a 3 X 8 AA repeats of S-P-R-R-R-[PR]-S-Q region; sequence SPRRRTPSPRRRRSQSPRRRRSQ. The Bipartite nuclear localization signal signature appears at 158–175; the sequence is RRTPSPRRRRSQSPRRRR. Tandem repeats lie at residues 162 to 169 and 170 to 177. Positions 177–183 are RNA binding; that stretch reads QSRESQC.

This sequence belongs to the orthohepadnavirus core antigen family. Homodimerizes, then multimerizes. Interacts with cytosol exposed regions of viral L glycoprotein present in the reticulum-to-Golgi compartment. Interacts with human FLNB. Phosphorylated form interacts with host importin alpha; this interaction depends on the exposure of the NLS, which itself depends upon genome maturation and/or phosphorylation of the capsid protein. Interacts with host NUP153. In terms of processing, phosphorylated by host SRPK1, SRPK2, and maybe protein kinase C or GAPDH. Phosphorylation is critical for pregenomic RNA packaging. Protein kinase C phosphorylation is stimulated by HBx protein and may play a role in transport of the viral genome to the nucleus at the late step during the viral replication cycle.

The protein localises to the virion. It localises to the host cytoplasm. Self assembles to form an icosahedral capsid. Most capsids appear to be large particles with an icosahedral symmetry of T=4 and consist of 240 copies of capsid protein, though a fraction forms smaller T=3 particles consisting of 180 capsid proteins. Entering capsids are transported along microtubules to the nucleus. Phosphorylation of the capsid is thought to induce exposure of nuclear localization signal in the C-terminal portion of the capsid protein that allows binding to the nuclear pore complex via the importin (karyopherin-) alpha and beta. Capsids are imported in intact form through the nuclear pore into the nuclear basket, where it probably binds NUP153. Only capsids that contain the mature viral genome can release the viral DNA and capsid protein into the nucleoplasm. Immature capsids get stuck in the basket. Capsids encapsulate the pre-genomic RNA and the P protein. Pre-genomic RNA is reverse-transcribed into DNA while the capsid is still in the cytoplasm. The capsid can then either be directed to the nucleus, providing more genomes for transcription, or bud through the endoplasmic reticulum to provide new virions. The protein is Capsid protein of Hepatitis B virus genotype B1 subtype adw (isolate Japan/pJDW233/1988) (HBV-B).